A 443-amino-acid chain; its full sequence is MSFQIRVFTAILAVLSLFTAPVLAQNSGPLRIEITEGVIEPLPFALPVFEAETADAADVAAQITQVIAADLTGTGLFRQIEPDAFISTVSSFAAPIQYADWKAINAQALITGAVAVQGNQLNVKFRLYDVFSGAEMGDGLQFSATPDGWRRMAHKVADAVYSRITGEGGYFDSRVVYVSETGTKDARQKRLAIMDYDGANVKYLTDSSSIVLAPRFSPDGQRILYTSYETGFPRIYVLDVTSLQRRGLESQEGTMSFAPRFAPDGQTIVFSLSQGGNTDIYRMNVNGGSATRLTSAPSIETAPSYSPDGTQIVFESDRSGSQQLYVMPANGGEARRISFGPGRYGTPVWSPRGDLVAFTKQNAGRFHIGVMRLDGSEERLLTASFLDEGPTWSPNGRVIMFSRETQGAQGRATLYSVDITGRNLRPVRTPEGGSDPSWSPLQR.

Positions 1–24 (MSFQIRVFTAILAVLSLFTAPVLA) are cleaved as a signal peptide. Residues 424–443 (LRPVRTPEGGSDPSWSPLQR) form a disordered region.

The protein belongs to the TolB family. The Tol-Pal system is composed of five core proteins: the inner membrane proteins TolA, TolQ and TolR, the periplasmic protein TolB and the outer membrane protein Pal. They form a network linking the inner and outer membranes and the peptidoglycan layer.

It is found in the periplasm. Part of the Tol-Pal system, which plays a role in outer membrane invagination during cell division and is important for maintaining outer membrane integrity. The protein is Tol-Pal system protein TolB of Roseobacter denitrificans (strain ATCC 33942 / OCh 114) (Erythrobacter sp. (strain OCh 114)).